A 1088-amino-acid polypeptide reads, in one-letter code: RNA-directed RNA polymerase (1088 aa).

Residues 501 to 687 enclose the RdRp catalytic domain; that stretch reads LSYGDVTRFL…AKRYIAGGKI (187 aa).

Belongs to the reoviridae RNA-directed RNA polymerase family. In terms of assembly, interacts with VP3 (Potential). Interacts with VP2; this interaction activates VP1. Interacts with NSP5; this interaction is probably necessary for the formation of functional virus factories. Interacts with NSP2; this interaction is weak. Requires Mg(2+) as cofactor.

It is found in the virion. It catalyses the reaction RNA(n) + a ribonucleoside 5'-triphosphate = RNA(n+1) + diphosphate. Functionally, RNA-directed RNA polymerase that is involved in both transcription and genome replication. Together with VP3 capping enzyme, forms an enzyme complex positioned near the channels situated at each of the five-fold vertices of the core. Following infection, the outermost layer of the virus is lost, leaving a double-layered particle (DLP) made up of the core and VP6 shell. VP1 then catalyzes the transcription of fully conservative plus-strand genomic RNAs that are extruded through the DLP's channels into the cytoplasm where they function as mRNAs for translation of viral proteins. One copy of each of the viral (+)RNAs is also recruited during core assembly, together with newly synthesized polymerase complexes and VP2. The polymerase of these novo-formed particles catalyzes the synthesis of complementary minus-strands leading to dsRNA formation. To do so, the polymerase specifically recognizes and binds 4 bases 5'-UGUG-3' in the conserved 3'-sequence of plus-strand RNA templates. VP2 presumably activates the autoinhibited VP1-RNA complex to coordinate packaging and genome replication. Once dsRNA synthesis is complete, the polymerase switches to the transcriptional mode, thus providing secondary transcription. This chain is RNA-directed RNA polymerase, found in Rotavirus A (strain RVA/Human/Philippines/L26/1987/G12P1B[4]) (RV-A).